Consider the following 193-residue polypeptide: Ion-translocating oxidoreductase complex subunit A (193 aa).

6 helical membrane-spanning segments follow: residues 5–25 (ILLI…FLGL), 39–59 (IGMG…AYLV), 72–92 (LRTL…EMVI), 102–122 (LLGI…VALL), 134–154 (VIYG…FAAL), and 171–191 (SIAL…SGLV).

Belongs to the NqrDE/RnfAE family. As to quaternary structure, the complex is composed of six subunits: RnfA, RnfB, RnfC, RnfD, RnfE and RnfG.

Its subcellular location is the cell inner membrane. Functionally, part of a membrane-bound complex that couples electron transfer with translocation of ions across the membrane. The chain is Ion-translocating oxidoreductase complex subunit A from Histophilus somni (strain 129Pt) (Haemophilus somnus).